We begin with the raw amino-acid sequence, 449 residues long: Xylose isomerase (449 aa).

Active-site residues include His103 and Asp106. Mg(2+) is bound by residues Glu234, Glu270, His273, Asp298, Asp309, Asp311, and Asp342.

Belongs to the xylose isomerase family. As to quaternary structure, homotetramer. Mg(2+) is required as a cofactor.

The protein localises to the cytoplasm. The catalysed reaction is alpha-D-xylose = alpha-D-xylulofuranose. In terms of biological role, involved in D-xylose catabolism. This Lactiplantibacillus pentosus (Lactobacillus pentosus) protein is Xylose isomerase (xylA).